We begin with the raw amino-acid sequence, 539 residues long: Chaperonin GroEL 2 (539 aa).

ATP-binding positions include 29–32, 86–90, glycine 414, 479–481, and aspartate 495; these read TIGP, DGTTT, and DAL.

The protein belongs to the chaperonin (HSP60) family. As to quaternary structure, forms a cylinder of 14 subunits composed of two heptameric rings stacked back-to-back. Interacts with the co-chaperonin GroES.

The protein resides in the cytoplasm. The enzyme catalyses ATP + H2O + a folded polypeptide = ADP + phosphate + an unfolded polypeptide.. Together with its co-chaperonin GroES, plays an essential role in assisting protein folding. The GroEL-GroES system forms a nano-cage that allows encapsulation of the non-native substrate proteins and provides a physical environment optimized to promote and accelerate protein folding. The protein is Chaperonin GroEL 2 of Synechococcus sp. (strain JA-2-3B'a(2-13)) (Cyanobacteria bacterium Yellowstone B-Prime).